A 343-amino-acid chain; its full sequence is Aspartate carbamoyltransferase catalytic subunit (343 aa).

Positions 91 and 92 each coordinate carbamoyl phosphate. L-aspartate is bound at residue K119. The carbamoyl phosphate site is built by R141, H171, and Q174. Residues R204 and R259 each contribute to the L-aspartate site. Positions 300 and 301 each coordinate carbamoyl phosphate.

This sequence belongs to the aspartate/ornithine carbamoyltransferase superfamily. ATCase family. As to quaternary structure, heterododecamer (2C3:3R2) of six catalytic PyrB chains organized as two trimers (C3), and six regulatory PyrI chains organized as three dimers (R2).

The enzyme catalyses carbamoyl phosphate + L-aspartate = N-carbamoyl-L-aspartate + phosphate + H(+). It functions in the pathway pyrimidine metabolism; UMP biosynthesis via de novo pathway; (S)-dihydroorotate from bicarbonate: step 2/3. Catalyzes the condensation of carbamoyl phosphate and aspartate to form carbamoyl aspartate and inorganic phosphate, the committed step in the de novo pyrimidine nucleotide biosynthesis pathway. This Burkholderia orbicola (strain MC0-3) protein is Aspartate carbamoyltransferase catalytic subunit.